The following is a 502-amino-acid chain: ATP synthase subunit alpha (502 aa).

169–176 (GDRQTGKT) serves as a coordination point for ATP.

The protein belongs to the ATPase alpha/beta chains family. As to quaternary structure, F-type ATPases have 2 components, CF(1) - the catalytic core - and CF(0) - the membrane proton channel. CF(1) has five subunits: alpha(3), beta(3), gamma(1), delta(1), epsilon(1). CF(0) has three main subunits: a(1), b(2) and c(9-12). The alpha and beta chains form an alternating ring which encloses part of the gamma chain. CF(1) is attached to CF(0) by a central stalk formed by the gamma and epsilon chains, while a peripheral stalk is formed by the delta and b chains. The F(1)F(0) complex interacts with SpoIIIJ and YqjG; YqgA is found in the same complex.

It is found in the cell membrane. The protein localises to the membrane raft. It carries out the reaction ATP + H2O + 4 H(+)(in) = ADP + phosphate + 5 H(+)(out). Functionally, produces ATP from ADP in the presence of a proton gradient across the membrane. The alpha chain is a regulatory subunit. The chain is ATP synthase subunit alpha from Bacillus subtilis (strain 168).